A 330-amino-acid chain; its full sequence is uncharacterized protein (330 aa).

Residue 125–132 (GPPGCGKT) participates in ATP binding.

This sequence belongs to the AAA ATPase family.

This is an uncharacterized protein from Sinorhizobium fredii (strain NBRC 101917 / NGR234).